A 391-amino-acid chain; its full sequence is GTPase Obg (391 aa).

The Obg domain maps to 1–159 (MKFVDEASIL…RDLLLELMLL (159 aa)). A disordered region spans residues 127–147 (NTRFKSSVNRTPRQKTNGTPG). The span at 129-145 (RFKSSVNRTPRQKTNGT) shows a compositional bias: polar residues. Positions 160–333 (ADVGMLGMPN…LCWDVMTFII (174 aa)) constitute an OBG-type G domain. Residues 166–173 (GMPNAGKS), 191–195 (FTTLV), 213–216 (DIPG), 283–286 (NKID), and 314–316 (SAA) each bind GTP. Mg(2+)-binding residues include Ser-173 and Thr-193.

Belongs to the TRAFAC class OBG-HflX-like GTPase superfamily. OBG GTPase family. As to quaternary structure, monomer. Mg(2+) serves as cofactor.

Its subcellular location is the cytoplasm. In terms of biological role, an essential GTPase which binds GTP, GDP and possibly (p)ppGpp with moderate affinity, with high nucleotide exchange rates and a fairly low GTP hydrolysis rate. Plays a role in control of the cell cycle, stress response, ribosome biogenesis and in those bacteria that undergo differentiation, in morphogenesis control. The protein is GTPase Obg of Salmonella arizonae (strain ATCC BAA-731 / CDC346-86 / RSK2980).